We begin with the raw amino-acid sequence, 96 residues long: MSVKIRLHLMGTKKRPFYRIVVADSRARRDGRFIEEVGYYNPITKPAEIKLNDDQIFNWLMKGAQPTNTVRNFLSDAGLMKKLHEAKLAAKKESKK.

The protein belongs to the bacterial ribosomal protein bS16 family.

This Oenococcus oeni (strain ATCC BAA-331 / PSU-1) protein is Small ribosomal subunit protein bS16.